Consider the following 198-residue polypeptide: Nucleoid occlusion factor SlmA (198 aa).

Positions 10-70 (NRREEILQSL…SLIEFIEDSL (61 aa)) constitute an HTH tetR-type domain. Residues 33–52 (TTAKLAASVGVSEAALYRHF) constitute a DNA-binding region (H-T-H motif). Positions 117 to 144 (EQDRLQGRINQLFERIEAQLRQVLREKR) form a coiled coil.

The protein belongs to the nucleoid occlusion factor SlmA family. As to quaternary structure, homodimer. Interacts with FtsZ.

Its subcellular location is the cytoplasm. The protein localises to the nucleoid. Required for nucleoid occlusion (NO) phenomenon, which prevents Z-ring formation and cell division over the nucleoid. Acts as a DNA-associated cell division inhibitor that binds simultaneously chromosomal DNA and FtsZ, and disrupts the assembly of FtsZ polymers. SlmA-DNA-binding sequences (SBS) are dispersed on non-Ter regions of the chromosome, preventing FtsZ polymerization at these regions. In Escherichia coli O127:H6 (strain E2348/69 / EPEC), this protein is Nucleoid occlusion factor SlmA.